Consider the following 237-residue polypeptide: 7-cyano-7-deazaguanine synthase (237 aa).

14-24 serves as a coordination point for ATP; it reads FSGGQDSATCL. Positions 202, 217, 220, and 223 each coordinate Zn(2+).

The protein belongs to the QueC family. It depends on Zn(2+) as a cofactor.

The catalysed reaction is 7-carboxy-7-deazaguanine + NH4(+) + ATP = 7-cyano-7-deazaguanine + ADP + phosphate + H2O + H(+). It functions in the pathway purine metabolism; 7-cyano-7-deazaguanine biosynthesis. In terms of biological role, catalyzes the ATP-dependent conversion of 7-carboxy-7-deazaguanine (CDG) to 7-cyano-7-deazaguanine (preQ(0)). The chain is 7-cyano-7-deazaguanine synthase from Rhodopseudomonas palustris (strain TIE-1).